The chain runs to 309 residues: Bombesin receptor-activated protein C6orf89 homolog (309 aa).

Residues 1–59 lie on the Cytoplasmic side of the membrane; the sequence is MGSSLSEPCIYDKLSESIDILRQSGYRYGMSEREIEKFIKQVLETNEPRREPPQFPILR. The chain crosses the membrane as a helical span at residues 60-80; sequence ATVKFVVAVGVVLMAVLVFTY. The Extracellular segment spans residues 81–309; that stretch reads PQSPVLMGSV…QDVQCDSAVL (229 aa).

Homodimer.

It localises to the golgi apparatus membrane. The protein localises to the cytoplasm. Exhibits histone deacetylase (HDAC) enhancer properties. May play a role in progression through the cell cycle. This chain is Bombesin receptor-activated protein C6orf89 homolog, found in Danio rerio (Zebrafish).